The following is a 135-amino-acid chain: Galectin-1 (135 aa).

Ala2 bears the N-acetylalanine mark. The region spanning 4–135 is the Galectin domain; sequence GLVASNLNLK…DFKIKCVAFD (132 aa). N6-acetyllysine is present on residues Lys13 and Lys29. A Phosphoserine; by FAM20C modification is found at Ser30. Residues 45–49, His53, Asn62, and 69–72 each bind a beta-D-galactoside; these read HFNPR and WGTE. Lys108 carries the post-translational modification N6-acetyllysine; alternate. N6-succinyllysine; alternate is present on Lys108. Position 128 is an N6-acetyllysine (Lys128).

Homodimer. Binds LGALS3BP. Interacts with CD2, CD3, CD4, CD6, CD7, CD43, ALCAM and CD45. Interacts with laminin (via poly-N-acetyllactosamine). Interacts with SUSD2. Interacts with cargo receptor TMED10; the interaction mediates the translocation from the cytoplasm into the ERGIC (endoplasmic reticulum-Golgi intermediate compartment) and thereby secretion. Interacts with CD69. As to expression, expressed in placenta, maternal decidua and fetal membranes. Within placenta, expressed in trophoblasts, stromal cells, villous endothelium, syncytiotrophoblast apical membrane and villous stroma. Within fetal membranes, expressed in amnion, chorioamniotic mesenchyma and chorion (at protein level). Expressed in cardiac, smooth, and skeletal muscle, neurons, thymus, kidney and hematopoietic cells.

The protein resides in the secreted. It is found in the extracellular space. The protein localises to the extracellular matrix. Its subcellular location is the cytoplasm. Functionally, lectin that binds beta-galactoside and a wide array of complex carbohydrates. Plays a role in regulating apoptosis, cell proliferation and cell differentiation. Inhibits CD45 protein phosphatase activity and therefore the dephosphorylation of Lyn kinase. Strong inducer of T-cell apoptosis. Plays a negative role in Th17 cell differentiation via activation of the receptor CD69. In Homo sapiens (Human), this protein is Galectin-1.